A 257-amino-acid chain; its full sequence is Putative hydro-lyase Bcenmc03_3969 (257 aa).

Belongs to the D-glutamate cyclase family.

This Burkholderia orbicola (strain MC0-3) protein is Putative hydro-lyase Bcenmc03_3969.